The chain runs to 591 residues: Ferric-chelate reductase 1 (591 aa).

The helical transmembrane segment at 6-26 (FTVSAFILLLHVSFVANYPSG) threads the bilayer. The region spanning 13–179 (LLLHVSFVAN…FTTPEATIAP (167 aa)) is the Reelin domain. Residues Asn-50, Asn-85, Asn-308, Asn-321, and Asn-353 are each glycosylated (N-linked (GlcNAc...) asparagine). In terms of domain architecture, DOMON spans 216–331 (ERACVLLSFT…ASYYIFVADG (116 aa)). One can recognise a Cytochrome b561 domain in the interval 335-533 (DGRIHKHSQQ…VGTEIILEIH (199 aa)). Residues 372–392 (VHGALMFVAWMTTVSVGVLIA) form a helical membrane-spanning segment. Heme b-binding residues include His-373 and His-413. 2 helical membrane-spanning segments follow: residues 416–436 (LMLT…IYRG) and 445–465 (HPYL…LAAF). Heme b contacts are provided by His-445 and His-481. The next 3 helical transmembrane spans lie at 490–510 (IIAV…LPGP), 514–534 (YAMI…EIHA), and 568–588 (VVLA…LSAI).

The protein belongs to the FRRS1 family. Heme b is required as a cofactor.

The protein localises to the membrane. Functionally, ferric-chelate reductases reduce Fe(3+) to Fe(2+) before its transport from the endosome to the cytoplasm. The polypeptide is Ferric-chelate reductase 1 (FRRS1) (Bos taurus (Bovine)).